Reading from the N-terminus, the 504-residue chain is Histidine ammonia-lyase (504 aa).

Residues 142-144 constitute a cross-link (5-imidazolinone (Ala-Gly)); that stretch reads ASG. A 2,3-didehydroalanine (Ser) modification is found at Ser-143.

This sequence belongs to the PAL/histidase family. Contains an active site 4-methylidene-imidazol-5-one (MIO), which is formed autocatalytically by cyclization and dehydration of residues Ala-Ser-Gly.

Its subcellular location is the cytoplasm. It carries out the reaction L-histidine = trans-urocanate + NH4(+). Its pathway is amino-acid degradation; L-histidine degradation into L-glutamate; N-formimidoyl-L-glutamate from L-histidine: step 1/3. This chain is Histidine ammonia-lyase, found in Staphylococcus aureus (strain JH1).